We begin with the raw amino-acid sequence, 208 residues long: Translation initiation factor 2 subunit beta (208 aa).

In terms of domain architecture, TRAM spans 145–203; it reads VIEEGETYELRIESVGSKGDGIAKVDKYLIFVPNTSKGEIVKAKVKKISGTLAFAEIVE.

Belongs to the eIF-2-beta/eIF-5 family. In terms of assembly, heterotrimer composed of an alpha, a beta and a gamma chain.

In terms of biological role, eIF-2 functions in the early steps of protein synthesis by forming a ternary complex with GTP and initiator tRNA. The protein is Translation initiation factor 2 subunit beta of Methanothrix thermoacetophila (strain DSM 6194 / JCM 14653 / NBRC 101360 / PT) (Methanosaeta thermophila).